The sequence spans 312 residues: Methionyl-tRNA formyltransferase (312 aa).

Position 110–113 (110–113) interacts with (6S)-5,6,7,8-tetrahydrofolate; that stretch reads SLLP.

The protein belongs to the Fmt family.

It catalyses the reaction L-methionyl-tRNA(fMet) + (6R)-10-formyltetrahydrofolate = N-formyl-L-methionyl-tRNA(fMet) + (6S)-5,6,7,8-tetrahydrofolate + H(+). In terms of biological role, attaches a formyl group to the free amino group of methionyl-tRNA(fMet). The formyl group appears to play a dual role in the initiator identity of N-formylmethionyl-tRNA by promoting its recognition by IF2 and preventing the misappropriation of this tRNA by the elongation apparatus. This is Methionyl-tRNA formyltransferase from Streptococcus suis (strain 05ZYH33).